The primary structure comprises 524 residues: GMP synthase [glutamine-hydrolyzing] (524 aa).

Positions 7-196 (PVLVVDFGAQ…LHELAGIPAS (190 aa)) constitute a Glutamine amidotransferase type-1 domain. Residue cysteine 84 is the Nucleophile of the active site. Active-site residues include histidine 170 and glutamate 172. A GMPS ATP-PPase domain is found at 197 to 398 (WTPSNIADVL…LGLPEEIVAR (202 aa)). Residue 224–230 (SGGVDSA) coordinates ATP.

In terms of assembly, homodimer.

It carries out the reaction XMP + L-glutamine + ATP + H2O = GMP + L-glutamate + AMP + diphosphate + 2 H(+). It participates in purine metabolism; GMP biosynthesis; GMP from XMP (L-Gln route): step 1/1. Catalyzes the synthesis of GMP from XMP. The sequence is that of GMP synthase [glutamine-hydrolyzing] from Nocardia farcinica (strain IFM 10152).